A 189-amino-acid chain; its full sequence is Peptidyl-tRNA hydrolase (189 aa).

A tRNA-binding site is contributed by Tyr-14. His-19 serves as the catalytic Proton acceptor. TRNA-binding residues include Tyr-64, Asn-66, and Asn-112.

This sequence belongs to the PTH family. Monomer.

The protein localises to the cytoplasm. It catalyses the reaction an N-acyl-L-alpha-aminoacyl-tRNA + H2O = an N-acyl-L-amino acid + a tRNA + H(+). Its function is as follows. Hydrolyzes ribosome-free peptidyl-tRNAs (with 1 or more amino acids incorporated), which drop off the ribosome during protein synthesis, or as a result of ribosome stalling. Functionally, catalyzes the release of premature peptidyl moieties from peptidyl-tRNA molecules trapped in stalled 50S ribosomal subunits, and thus maintains levels of free tRNAs and 50S ribosomes. In Clostridium botulinum (strain Langeland / NCTC 10281 / Type F), this protein is Peptidyl-tRNA hydrolase.